Reading from the N-terminus, the 1146-residue chain is Large proline-rich protein BAG6 (1146 aa).

Met1 bears the N-acetylmethionine mark. One can recognise a Ubiquitin-like domain in the interval 17 to 92 (LEVLVKTLDS…HLVERAPPQT (76 aa)). Disordered regions lie at residues 87–128 (RAPP…HDRN), 186–268 (RGGT…HPSP), 381–436 (TMTG…TSHP), 457–525 (QDSG…QGAG), and 555–618 (PGMA…SAAD). At Ser96 the chain carries Phosphoserine. A compositionally biased stretch (low complexity) spans 96 to 108 (SGASSGTGSASAT). Residues 109–122 (HGGGPLPGTRGPGA) are compositionally biased toward gly residues. Thr117 carries the phosphothreonine modification. Over residues 208–217 (VALNSQTSEP) the composition is skewed to polar residues. Tandem repeats lie at residues 236-265 (RPPTQTPELPPSGPAPAGPAPAPETNAPNH) and 410-438 (PSSATVDSSTEGAPPPGPAPPPATSHPRV). The interval 236–650 (RPPTQTPELP…LASPTITVAV (415 aa)) is 4 X 29 AA approximate repeats. Pro residues predominate over residues 239-257 (TQTPELPPSGPAPAGPAPA). A compositionally biased stretch (low complexity) spans 394–413 (GAEAASPGSGQASSLPPSSA). Composition is skewed to pro residues over residues 422–433 (APPPGPAPPPAT) and 502–515 (PTPPQARPSHPGGP). 2 stretches are compositionally biased toward low complexity: residues 555-573 (PGMAPASASAPATAQAQAP) and 583-601 (PATASASAGTTNTATTAGP). 2 consecutive repeat copies span residues 589-616 (SAGTTNTATTAGPAPGGPAQPPPPQPSA) and 622-650 (SQLLGNLLGPAGPGAGGPSLASPTITVAV). The segment covering 603–614 (PGGPAQPPPPQP) has biased composition (pro residues). 2 disordered regions span residues 666-711 (ASQA…ESLP) and 961-1146 (PQAL…ADDP). Positions 670 to 694 (APPPPPPPPPPPPAPEQQTTPPPGS) are enriched in pro residues. Positions 977–986 (TSPEPQREDA) are enriched in basic and acidic residues. Ser978 and Ser987 each carry phosphoserine. The segment covering 1021–1034 (AEPWAAAVPPEWVP) has biased composition (low complexity). The required for interaction with GET4 stretch occupies residues 1024–1054 (WAAAVPPEWVPIIQQDIQSQRKVKPQPPLSD). Residues 1026-1068 (AAVPPEWVPIIQQDIQSQRKVKPQPPLSDAYLSGMPAKRRKTM) carry the Nuclear localization site motif. A sufficient for the delivery of client proteins to the endoplasmic reticulum region spans residues 1036–1146 (IQQDIQSQRK…NAHRAFADDP (111 aa)). Thr1067 carries the post-translational modification Phosphothreonine. Positions 1072–1129 (GPQLLLSEAVSRAAKAAGARPLTSPESLSRDLEAPEVQESYRQQLRSDIQKRLQEDPN) are BAG-similar domain, required and sufficient for interaction with UBL4A. Positions 1080 to 1090 (AVSRAAKAAGA) are enriched in low complexity. Residues Ser1095 and Ser1131 each carry the phosphoserine modification.

As to quaternary structure, component of the BAG6/BAT3 complex, also named BAT3 complex, at least composed of BAG6, UBL4A and GET4/TRC35. Interacts with GET4; the interaction is direct and localizes BAG6 in the cytosol. Interacts with UBL4A; the interaction is direct and required for UBL4A protein stability. Interacts with AIFM1. Interacts with HSPA2. Interacts with CTCFL. Interacts with p300/EP300. Interacts (via ubiquitin-like domain) with RNF126; required for BAG6-dependent ubiquitination of proteins mislocalized to the cytosol. Interacts (via ubiquitin-like domain) with SGTA; SGTA competes with RNF126 by binding the same region of BAG6, thereby promoting deubiquitination of BAG6-target proteins and rescuing them from degradation. Interacts with ricin A chain. Interacts with VCP and AMFR; both form the VCP/p97-AMFR/gp78 complex. Interacts with SYVN1. Interacts with USP13; the interaction is direct and may mediate UBL4A deubiquitination. Interacts with ZFAND2B. Interacts with KPNA2. Interacts with UBQLN4. Post-translationally, ricin can induce a cleavage by the caspase CASP3. The released C-terminal peptide induces apoptosis.

The protein resides in the cytoplasm. Its subcellular location is the cytosol. It localises to the nucleus. The protein localises to the secreted. It is found in the extracellular exosome. ATP-independent molecular chaperone preventing the aggregation of misfolded and hydrophobic patches-containing proteins. Functions as part of a cytosolic protein quality control complex, the BAG6/BAT3 complex, which maintains these client proteins in a soluble state and participates in their proper delivery to the endoplasmic reticulum or alternatively can promote their sorting to the proteasome where they undergo degradation. The BAG6/BAT3 complex is involved in the post-translational delivery of tail-anchored/type II transmembrane proteins to the endoplasmic reticulum membrane. Recruited to ribosomes, it interacts with the transmembrane region of newly synthesized tail-anchored proteins and together with SGTA and ASNA1 mediates their delivery to the endoplasmic reticulum. Client proteins that cannot be properly delivered to the endoplasmic reticulum are ubiquitinated by RNF126, an E3 ubiquitin-protein ligase associated with BAG6 and are sorted to the proteasome. SGTA which prevents the recruitment of RNF126 to BAG6 may negatively regulate the ubiquitination and the proteasomal degradation of client proteins. Similarly, the BAG6/BAT3 complex also functions as a sorting platform for proteins of the secretory pathway that are mislocalized to the cytosol either delivering them to the proteasome for degradation or to the endoplasmic reticulum. The BAG6/BAT3 complex also plays a role in the endoplasmic reticulum-associated degradation (ERAD), a quality control mechanism that eliminates unwanted proteins of the endoplasmic reticulum through their retrotranslocation to the cytosol and their targeting to the proteasome. It maintains these retrotranslocated proteins in an unfolded yet soluble state condition in the cytosol to ensure their proper delivery to the proteasome. BAG6 is also required for selective ubiquitin-mediated degradation of defective nascent chain polypeptides by the proteasome. In this context, it may participate in the production of antigenic peptides and play a role in antigen presentation in immune response. BAG6 is also involved in endoplasmic reticulum stress-induced pre-emptive quality control, a mechanism that selectively attenuates the translocation of newly synthesized proteins into the endoplasmic reticulum and reroutes them to the cytosol for proteasomal degradation. BAG6 may ensure the proper degradation of these proteins and thereby protects the endoplasmic reticulum from protein overload upon stress. By inhibiting the polyubiquitination and subsequent proteasomal degradation of HSPA2 it may also play a role in the assembly of the synaptonemal complex during spermatogenesis. Also positively regulates apoptosis by interacting with and stabilizing the proapoptotic factor AIFM1. By controlling the steady-state expression of the IGF1R receptor, indirectly regulates the insulin-like growth factor receptor signaling pathway. In terms of biological role, involved in DNA damage-induced apoptosis: following DNA damage, accumulates in the nucleus and forms a complex with p300/EP300, enhancing p300/EP300-mediated p53/TP53 acetylation leading to increase p53/TP53 transcriptional activity. When nuclear, may also act as a component of some chromatin regulator complex that regulates histone 3 'Lys-4' dimethylation (H3K4me2). Functionally, released extracellularly via exosomes, it is a ligand of the natural killer/NK cells receptor NCR3 and stimulates NK cells cytotoxicity. It may thereby trigger NK cells cytotoxicity against neighboring tumor cells and immature myeloid dendritic cells (DC). Its function is as follows. May mediate ricin-induced apoptosis. The chain is Large proline-rich protein BAG6 from Rattus norvegicus (Rat).